The following is a 957-amino-acid chain: Glycine dehydrogenase (decarboxylating) (957 aa).

Lysine 708 carries the N6-(pyridoxal phosphate)lysine modification.

The protein belongs to the GcvP family. The glycine cleavage system is composed of four proteins: P, T, L and H. Requires pyridoxal 5'-phosphate as cofactor.

It catalyses the reaction N(6)-[(R)-lipoyl]-L-lysyl-[glycine-cleavage complex H protein] + glycine + H(+) = N(6)-[(R)-S(8)-aminomethyldihydrolipoyl]-L-lysyl-[glycine-cleavage complex H protein] + CO2. The glycine cleavage system catalyzes the degradation of glycine. The P protein binds the alpha-amino group of glycine through its pyridoxal phosphate cofactor; CO(2) is released and the remaining methylamine moiety is then transferred to the lipoamide cofactor of the H protein. This is Glycine dehydrogenase (decarboxylating) from Escherichia coli O1:K1 / APEC.